The sequence spans 1063 residues: Coiled-coil domain-containing protein 187 (1063 aa).

7 disordered regions span residues 1–41, 62–184, 219–278, 300–319, 392–484, 496–539, and 551–658; these read MPTL…AADW, RWPG…SRLH, RVEA…KDED, PPPV…PALT, RKGG…ERLG, GQAC…ATQP, and WEDP…LEEK. Low complexity predominate over residues 111–124; sequence SSVSSGRLSCSSGG. Over residues 146 to 160 the composition is skewed to basic and acidic residues; the sequence is RKSDARLEQLRDKIR. Residues 163-181 are compositionally biased toward polar residues; the sequence is AWQQGSCASLGTSAPSSAS. Residues 219–233 show a composition bias toward basic and acidic residues; that stretch reads RVEAKASHGQGRELS. Basic and acidic residues-rich tracts occupy residues 431-442 and 472-484; these read TERKHSSLERAR and SFQR…ERLG. The span at 508–517 shows a compositional bias: low complexity; it reads QRQGPSSQRP. Residues 816-851 are a coiled coil; it reads HLRHKQAQLQALETTAKVLKQRVDSLTAKLQGAEAL. The tract at residues 1010–1030 is disordered; the sequence is PRSCGKGDPADRPWAGWSGGR.

The polypeptide is Coiled-coil domain-containing protein 187 (Homo sapiens (Human)).